Here is a 246-residue protein sequence, read N- to C-terminus: Sensory transduction protein LytT (246 aa).

The region spanning 3 to 117 (KVLVVDDEML…RIVQTLKKYK (115 aa)) is the Response regulatory domain. The 105-residue stretch at 142 to 246 (LALPIEESIV…AKELKKLLRI (105 aa)) folds into the HTH LytTR-type domain.

Phosphorylated by LytS.

The protein localises to the cytoplasm. Member of the two-component regulatory system LytS/LytT that probably regulates genes involved in cell wall metabolism. The polypeptide is Sensory transduction protein LytT (lytT) (Bacillus cereus (strain ATCC 14579 / DSM 31 / CCUG 7414 / JCM 2152 / NBRC 15305 / NCIMB 9373 / NCTC 2599 / NRRL B-3711)).